We begin with the raw amino-acid sequence, 365 residues long: Uroporphyrinogen decarboxylase (365 aa).

A compositionally biased stretch (polar residues) spans 1 to 17 (MSANDSPSGQQTTTSAS). The interval 1–20 (MSANDSPSGQQTTTSASLDA) is disordered. Substrate contacts are provided by residues 48 to 52 (RQAGR), D97, Y172, S227, and H341.

The protein belongs to the uroporphyrinogen decarboxylase family. In terms of assembly, homodimer.

It is found in the cytoplasm. The enzyme catalyses uroporphyrinogen III + 4 H(+) = coproporphyrinogen III + 4 CO2. It participates in porphyrin-containing compound metabolism; protoporphyrin-IX biosynthesis; coproporphyrinogen-III from 5-aminolevulinate: step 4/4. In terms of biological role, catalyzes the decarboxylation of four acetate groups of uroporphyrinogen-III to yield coproporphyrinogen-III. The polypeptide is Uroporphyrinogen decarboxylase (Streptomyces griseus subsp. griseus (strain JCM 4626 / CBS 651.72 / NBRC 13350 / KCC S-0626 / ISP 5235)).